The chain runs to 865 residues: Centrosomal protein of 97 kDa (865 aa).

LRR repeat units lie at residues 37 to 58, 59 to 80, 81 to 102, 103 to 124, 125 to 146, 147 to 168, 171 to 192, and 196 to 205; these read DIHTLILDKNQIIKLENLEKCK, RLIQLSVANNRLVRMMGVAKLT, LLRVLNLPHNSIGCVEGLKELV, HLEWLNLAGNNLKAMEQINSCT, ALQHLDLSDNNISQIGDLSKLV, SLKTLLLHGNIITSLRMAPAYL, SLAILSLAENEIRDLNEISFLA, and ELEQLSIMNN. The LRRCT domain occupies 211–249; the sequence is TPSIPGFDYRPYIVSWCLNLRVLDGYVISQKESLKAEWL. A CCP110-binding region spans residues 300–750; it reads HQRQLMNQSQ…RYGKESDLGD (451 aa). 3 positions are modified to phosphoserine: S308, S413, and S500. A disordered region spans residues 506 to 529; it reads ESTEQKQSDIKKPENTQPENKETI. Residues 508–527 are compositionally biased toward basic and acidic residues; it reads TEQKQSDIKKPENTQPENKE. S530 bears the Phosphoserine mark. T542 is subject to Phosphothreonine. One can recognise an IQ domain in the interval 558-587; sequence LNDAATKLQACWRGFYARNYNPQAKDVRYE. Residues 587 to 865 form an interaction with MPHOSPH9 region; it reads EIRLRRMQEH…FQLLHVGVTV (279 aa). The disordered stretch occupies residues 715–769; that stretch reads QHSLDFEKSSTEGSESSIMGNSIDTVRYGKESDLGDVSEEHGEWNKESSNNEQDN. Residues 725–738 are compositionally biased toward polar residues; it reads TEGSESSIMGNSID. Over residues 741–760 the composition is skewed to basic and acidic residues; it reads RYGKESDLGDVSEEHGEWNK. S763 carries the post-translational modification Phosphoserine.

In terms of assembly, interacts with CALM1, CEP76, KIF24 and TALPID3. Interacts with CCP110. ENKD1 competes with CEP97 for binding to CCP110, destabilizing the interaction between CP110 and CEP97 which promotes the removal of CCP110 and CEP97 from the mother centriole and allows the initiation of ciliogenesis. Via its interaction with CCP110, may indirectly interact with HERC2 and NEURL4. Interacts with MPHOSPH9.

It is found in the cytoplasm. Its subcellular location is the cytoskeleton. It localises to the microtubule organizing center. The protein localises to the centrosome. The protein resides in the centriole. Functionally, acts as a key negative regulator of ciliogenesis in collaboration with CCP110 by capping the mother centriole thereby preventing cilia formation. Required for recruitment of CCP110 to the centrosome. The polypeptide is Centrosomal protein of 97 kDa (CEP97) (Homo sapiens (Human)).